Consider the following 757-residue polypeptide: Endonuclease MutS2 (757 aa).

ATP is bound at residue 321-328; the sequence is GPNMGGKT. Positions 681 to 756 constitute a Smr domain; it reads IDIRGMTVEE…GTGVTVVEVE (76 aa).

The protein belongs to the DNA mismatch repair MutS family. MutS2 subfamily. As to quaternary structure, homodimer. Binds to stalled ribosomes, contacting rRNA.

Endonuclease that is involved in the suppression of homologous recombination and thus may have a key role in the control of bacterial genetic diversity. Its function is as follows. Acts as a ribosome collision sensor, splitting the ribosome into its 2 subunits. Detects stalled/collided 70S ribosomes which it binds and splits by an ATP-hydrolysis driven conformational change. Acts upstream of the ribosome quality control system (RQC), a ribosome-associated complex that mediates the extraction of incompletely synthesized nascent chains from stalled ribosomes and their subsequent degradation. Probably generates substrates for RQC. This Thermotoga neapolitana (strain ATCC 49049 / DSM 4359 / NBRC 107923 / NS-E) protein is Endonuclease MutS2.